Reading from the N-terminus, the 113-residue chain is Replication initiation control protein YabA (113 aa).

Zn(2+) is bound by residues His88, Cys90, Cys104, and Cys107.

The protein belongs to the YabA family. As to quaternary structure, homotetramer. Interacts with both DnaA and DnaN, acting as a bridge between these two proteins. Zn(2+) serves as cofactor.

The protein resides in the cytoplasm. It localises to the nucleoid. In terms of biological role, involved in control of chromosome replication initiation. Inhibits the cooperative binding of DnaA to the oriC region, thus negatively regulating initiation of chromosome replication. Inhibits the ability of DnaA-ATP to form a helix on DNA; does not disassemble preformed DnaA-DNA helices. Decreases the residence time of DnaA on the chromosome at its binding sites (oriC, replication forks and promoter-binding sites). Tethers DnaA to the replication machinery via the DNA polymerase beta sliding clamp subunit (dnaN). Associates with oriC and other DnaA targets on the chromosome in a DnaA-dependent manner. This chain is Replication initiation control protein YabA, found in Staphylococcus saprophyticus subsp. saprophyticus (strain ATCC 15305 / DSM 20229 / NCIMB 8711 / NCTC 7292 / S-41).